Consider the following 325-residue polypeptide: Peroxidase 68 (325 aa).

Positions 1–28 (MECYEQSRQRAAFVVLLFIVMLGSQAQA) are cleaved as a signal peptide. Pyrrolidone carboxylic acid is present on Gln29. Cystine bridges form between Cys39–Cys119, Cys72–Cys77, Cys125–Cys321, and Cys205–Cys230. The Proton acceptor role is filled by His70. 5 residues coordinate Ca(2+): Asp71, Val74, Gly76, Asp78, and Ser80. Asn99 carries N-linked (GlcNAc...) asparagine glycosylation. Position 168 (Pro168) interacts with substrate. His198 contacts heme b. Thr199 provides a ligand contact to Ca(2+). N-linked (GlcNAc...) asparagine glycosylation occurs at Asn214. Residues Asp245, Thr248, and Asp253 each contribute to the Ca(2+) site.

It belongs to the peroxidase family. Classical plant (class III) peroxidase subfamily. It depends on heme b as a cofactor. Requires Ca(2+) as cofactor.

Its subcellular location is the secreted. It carries out the reaction 2 a phenolic donor + H2O2 = 2 a phenolic radical donor + 2 H2O. Functionally, removal of H(2)O(2), oxidation of toxic reductants, biosynthesis and degradation of lignin, suberization, auxin catabolism, response to environmental stresses such as wounding, pathogen attack and oxidative stress. These functions might be dependent on each isozyme/isoform in each plant tissue. This chain is Peroxidase 68 (PER68), found in Arabidopsis thaliana (Mouse-ear cress).